The primary structure comprises 429 residues: UPF0597 protein AHA_1619 (429 aa).

It belongs to the UPF0597 family.

The polypeptide is UPF0597 protein AHA_1619 (Aeromonas hydrophila subsp. hydrophila (strain ATCC 7966 / DSM 30187 / BCRC 13018 / CCUG 14551 / JCM 1027 / KCTC 2358 / NCIMB 9240 / NCTC 8049)).